The primary structure comprises 305 residues: uncharacterized protein (305 aa).

Residues 267–287 (ADEQEKNWNGGAKKNARAEPA) form a disordered region.

Belongs to the DnaB/DnaD family.

This is an uncharacterized protein from Listeria innocua serovar 6a (strain ATCC BAA-680 / CLIP 11262).